A 90-amino-acid polypeptide reads, in one-letter code: uncharacterized protein (90 aa).

The disordered stretch occupies residues 53–90; that stretch reads WRARPDANDADTTSSSSSSETCTESDDSSDVPPARYAV. Residues 63-74 show a composition bias toward low complexity; it reads DTTSSSSSSETC.

This is an uncharacterized protein from Orgyia pseudotsugata (Douglas-fir tussock moth).